Consider the following 314-residue polypeptide: MIEIEKPRIETVEISEDSKFGKFVVEPLERGYGTTLGNSLRRILLSSLPGAAVKNIEIEGVLHEFSAIENVVEDVTSIIMNIKKLALKIYSDEDKTLEIDVKDEGVVTAKDIMHDSDVEILNPDLKIATVSKGGHLKMRLIANAGRGYTLAEDNNTSDLPIGVIPVDSIYTPVERVNYQVENTRVGQSTNFDKLTLDVWTDGSITPQEAISLGAKIMTEHLNIFVDLTDEAQNAEIMIEKEEDHKEKVLEMSIEELDLSVRSYNCLKRAGINSVQELADKSEADMMKVRNLGRKSLEEVKFKLEDLGLGLRKED.

Positions 1–228 (MIEIEKPRIE…EHLNIFVDLT (228 aa)) are alpha N-terminal domain (alpha-NTD). Residues 245-314 (KEKVLEMSIE…DLGLGLRKED (70 aa)) form an alpha C-terminal domain (alpha-CTD) region.

It belongs to the RNA polymerase alpha chain family. As to quaternary structure, homodimer. The RNAP catalytic core consists of 2 alpha, 1 beta, 1 beta' and 1 omega subunit. When a sigma factor is associated with the core the holoenzyme is formed, which can initiate transcription.

It carries out the reaction RNA(n) + a ribonucleoside 5'-triphosphate = RNA(n+1) + diphosphate. In terms of biological role, DNA-dependent RNA polymerase catalyzes the transcription of DNA into RNA using the four ribonucleoside triphosphates as substrates. The chain is DNA-directed RNA polymerase subunit alpha from Macrococcus caseolyticus (strain JCSC5402) (Macrococcoides caseolyticum).